The following is a 345-amino-acid chain: Ferrochelatase (345 aa).

Fe cation contacts are provided by histidine 215 and glutamate 296.

Belongs to the ferrochelatase family.

It is found in the cytoplasm. The enzyme catalyses heme b + 2 H(+) = protoporphyrin IX + Fe(2+). It participates in porphyrin-containing compound metabolism; protoheme biosynthesis; protoheme from protoporphyrin-IX: step 1/1. In terms of biological role, catalyzes the ferrous insertion into protoporphyrin IX. The polypeptide is Ferrochelatase (Rhodopseudomonas palustris (strain BisA53)).